Consider the following 217-residue polypeptide: uncharacterized protein (217 aa).

Residues 1–32 (MTLKKHRGKMSEKSNVNKKFTNSTQNNSNWSN) are disordered. Residues 22-32 (NSTQNNSNWSN) show a composition bias toward low complexity.

This is an uncharacterized protein from Acidianus filamentous virus 2 (isolate Italy/Pozzuoli) (AFV-2).